We begin with the raw amino-acid sequence, 236 residues long: 1-(5-phosphoribosyl)-5-[(5-phosphoribosylamino)methylideneamino] imidazole-4-carboxamide isomerase (236 aa).

The active-site Proton acceptor is the D8. The active-site Proton donor is D129.

It belongs to the HisA/HisF family.

The protein resides in the cytoplasm. It carries out the reaction 1-(5-phospho-beta-D-ribosyl)-5-[(5-phospho-beta-D-ribosylamino)methylideneamino]imidazole-4-carboxamide = 5-[(5-phospho-1-deoxy-D-ribulos-1-ylimino)methylamino]-1-(5-phospho-beta-D-ribosyl)imidazole-4-carboxamide. Its pathway is amino-acid biosynthesis; L-histidine biosynthesis; L-histidine from 5-phospho-alpha-D-ribose 1-diphosphate: step 4/9. This Ruminiclostridium cellulolyticum (strain ATCC 35319 / DSM 5812 / JCM 6584 / H10) (Clostridium cellulolyticum) protein is 1-(5-phosphoribosyl)-5-[(5-phosphoribosylamino)methylideneamino] imidazole-4-carboxamide isomerase.